A 169-amino-acid chain; its full sequence is Crossover junction endodeoxyribonuclease RuvC (169 aa).

Catalysis depends on residues Asp-11, Glu-71, and Asp-143. Mg(2+) contacts are provided by Asp-11, Glu-71, and Asp-143.

It belongs to the RuvC family. Homodimer which binds Holliday junction (HJ) DNA. The HJ becomes 2-fold symmetrical on binding to RuvC with unstacked arms; it has a different conformation from HJ DNA in complex with RuvA. In the full resolvosome a probable DNA-RuvA(4)-RuvB(12)-RuvC(2) complex forms which resolves the HJ. Requires Mg(2+) as cofactor.

The protein localises to the cytoplasm. It catalyses the reaction Endonucleolytic cleavage at a junction such as a reciprocal single-stranded crossover between two homologous DNA duplexes (Holliday junction).. Its function is as follows. The RuvA-RuvB-RuvC complex processes Holliday junction (HJ) DNA during genetic recombination and DNA repair. Endonuclease that resolves HJ intermediates. Cleaves cruciform DNA by making single-stranded nicks across the HJ at symmetrical positions within the homologous arms, yielding a 5'-phosphate and a 3'-hydroxyl group; requires a central core of homology in the junction. The consensus cleavage sequence is 5'-(A/T)TT(C/G)-3'. Cleavage occurs on the 3'-side of the TT dinucleotide at the point of strand exchange. HJ branch migration catalyzed by RuvA-RuvB allows RuvC to scan DNA until it finds its consensus sequence, where it cleaves and resolves the cruciform DNA. The sequence is that of Crossover junction endodeoxyribonuclease RuvC from Rhizobium leguminosarum bv. trifolii (strain WSM2304).